The sequence spans 313 residues: Porphobilinogen deaminase (313 aa).

Cys241 is modified (S-(dipyrrolylmethanemethyl)cysteine).

It belongs to the HMBS family. Monomer. The cofactor is dipyrromethane.

The catalysed reaction is 4 porphobilinogen + H2O = hydroxymethylbilane + 4 NH4(+). Its pathway is porphyrin-containing compound metabolism; protoporphyrin-IX biosynthesis; coproporphyrinogen-III from 5-aminolevulinate: step 2/4. The protein operates within porphyrin-containing compound metabolism; chlorophyll biosynthesis. Its function is as follows. Tetrapolymerization of the monopyrrole PBG into the hydroxymethylbilane pre-uroporphyrinogen in several discrete steps. This is Porphobilinogen deaminase from Chlorobium chlorochromatii (strain CaD3).